Reading from the N-terminus, the 607-residue chain is MMWKNIAGLSKAAAAARTHGSRRCFSTAIPGPCIVHKRGADILHDPWFNKDTGFPLTERDRLGIRGLLPPRVMTCVQQCDRFIESFRSLENNTKGEPENVVALAKWRMLNRLHDRNETLYYRVLIDNIKDFAPIIYTPTVGLVCQNYSGLYRRPRGMYFSAKDKGEMMSMIYNWPAPQVDMIVITDGSRILGLGDLGVQGIGIPIGKLDMYVAAAGINPQRVLPIMLDVGTNNEKLLQNDLYLGVRQPRLEGEEYLEIIDEFMEAAFTRWPKAVVQFEDFQAKWAFGTLERYRKKFCMFNDDVQGTAGVALAGLLGTVRAQGRPISDFVNQKIVVVGAGSAGLGVTKMAVQAVARMAGISESEATKNFYLIDKDGLVTTERTKLDPGAVLFAKNPAEIREGASIVEVVKKVRPHVLLGLSGVGGIFNEEVLKAMRESDSCKPAIFAMSNPTLNAECTAADAFKHAGGNIVFASGSPFENVELENGKVGHVNQANNMYLFPGIGLGTLLSGARIVTDGMLQAASECLASYMTDEEVQKGILYPSINNIRHITAEVGAAVLRAAVTDDIAEGHGDVGPKDLSHMSKEDTVNYITRNMWFPVYSPLVHEK.

The N-terminal 32 residues, 1–32 (MMWKNIAGLSKAAAAARTHGSRRCFSTAIPGP), are a transit peptide targeting the mitochondrion. Residue Y136 is the Proton donor of the active site. R189 lines the NAD(+) pocket. K207 functions as the Proton acceptor in the catalytic mechanism. A divalent metal cation contacts are provided by E278, D279, and D302. Residues D302 and N449 each coordinate NAD(+).

The protein belongs to the malic enzymes family. Homodimer. Heterodimer of two related subunits in NAD-MEH complex. Interacts with NAD-ME1. Mg(2+) is required as a cofactor. The cofactor is Mn(2+). As to expression, expressed in leaves, stems, flowers, and roots (at protein level). Present in pollen.

The protein resides in the mitochondrion. The enzyme catalyses (S)-malate + NAD(+) = pyruvate + CO2 + NADH. Its activity is regulated as follows. Activated by 2-ketoglutarate, phosphoenolpyruvate (PEP), fructose 1,6-biphosphate (FBP) and coenzyme A (acetyl-CoA and CoA) as homodimer and by oxaloacetate (OAA), 2-ketoglutarate, succinate, fumarate and CoA as heterodimer NAD-MEH. Repressed by succinate and fumarate as homodimer, in the presence of NAD(+) and competitively toward the substrate L-malate. Its function is as follows. Involved in the regulation of sugars and amino acids metabolisms during the night period. In Arabidopsis thaliana (Mouse-ear cress), this protein is NAD-dependent malic enzyme 2, mitochondrial (NAD-ME2).